Reading from the N-terminus, the 790-residue chain is B3 domain-containing transcription repressor VAL1 (790 aa).

The disordered stretch occupies residues 234-260; it reads KPSRPAISTPPVASKSAQARIGRPPVE. Positions 295 to 396 form a DNA-binding region, TF-B3; sequence FEKTLSASDA…KLIMGSRKAA (102 aa). 2 disordered regions span residues 400 to 429 and 446 to 468; these read DMQGCGLTNGTSTEDTSSSGVTENPPSING and NLNSETNGGRIGDDPTRVKEKKR. Over residues 405–429 the composition is skewed to polar residues; sequence GLTNGTSTEDTSSSGVTENPPSING. A CW-type zinc finger spans residues 538–588; that stretch reads SGEQERWATCDDCSKWRRLPVDALLSFKWTCIDNVWDVSRCSCSAPEESLK. Residues Cys-547, Cys-550, Cys-568, and Cys-580 each contribute to the Zn(2+) site. Residues 685–732 adopt a coiled-coil conformation; it reads LMMRRKKKQLERDVTAAEDKKKKDMELAESDKSKEEKEVNTARIDLNS. Residues 689–737 are disordered; the sequence is RKKKQLERDVTAAEDKKKKDMELAESDKSKEEKEVNTARIDLNSDPYNK. Basic and acidic residues predominate over residues 694–724; the sequence is LERDVTAAEDKKKKDMELAESDKSKEEKEVN.

Interacts with SNL1. Expressed in flowers and at lower levels in roots, stems and leaves.

The protein resides in the nucleus. Functionally, transcriptional repressor of gene expression involved in embryonic pathways, such as LEC1, ABI3, and FUS3. Repressor of the sugar-inducible genes involved in the seed maturation program in seedlings. Plays an essential role in regulating the transition from seed maturation to seedling growth. Functionally redundant with VAL2/HSL1. In Arabidopsis thaliana (Mouse-ear cress), this protein is B3 domain-containing transcription repressor VAL1 (VAL1).